Consider the following 1214-residue polypeptide: Ubiquitin carboxyl-terminal hydrolase 36 (1214 aa).

Residues 124 to 169 (AVGSNGHDNNTVNGGTVNGNRKQTVDSGQSNQNSSANPNELPKPKR) are disordered. Positions 132-143 (NNTVNGGTVNGN) are enriched in low complexity. A compositionally biased stretch (polar residues) spans 144–161 (RKQTVDSGQSNQNSSANP). Residues 192-502 (AGMLNVGNTC…NAYIMFYELD (311 aa)) form the USP domain. The active-site Nucleophile is cysteine 201. The active-site Proton acceptor is histidine 461. Residues 509-523 (SSTINNNSSSSSNNS) are compositionally biased toward low complexity. The interval 509–532 (SSTINNNSSSSSNNSVAPKLNGLR) is disordered. Serine 553 and serine 555 each carry phosphoserine. 5 disordered regions span residues 631–819 (GEAA…KQKT), 836–964 (HRIA…ASKS), 977–1001 (QKLL…SESV), 1048–1161 (HGDT…PNFQ), and 1176–1214 (KFQQ…QQQS). Over residues 633–651 (AAPNANTNANANKSSCNNN) the composition is skewed to low complexity. Over residues 666–685 (SDEDEDEDDSDDDDDDDDDD) the composition is skewed to acidic residues. Threonine 717 is modified (phosphothreonine). 2 positions are modified to phosphoserine: serine 727 and serine 729. 2 stretches are compositionally biased toward low complexity: residues 735 to 751 (QQQQ…PQQL) and 785 to 816 (KTNG…NSSK). Polar residues predominate over residues 856–868 (EQVQTEQGTKKLN). Positions 869–878 (SASSASASKS) are enriched in low complexity. Serine 891 bears the Phosphoserine mark. At threonine 894 the chain carries Phosphothreonine. Residue serine 897 is modified to Phosphoserine. Residues 915 to 942 (DDDDEEDEEEDDVEADADQEDDDDEVVV) show a composition bias toward acidic residues. At threonine 951 the chain carries Phosphothreonine. Polar residues predominate over residues 983–1001 (SAKSAATTRPGNGYQSESV). Residues 1058–1076 (NSSSNNSSNINSNSNSNSN) show a composition bias toward low complexity. Basic and acidic residues predominate over residues 1089 to 1098 (EAREQRKRDA). Composition is skewed to low complexity over residues 1178–1188 (QQQRALQRHLA) and 1197–1214 (QQQS…QQQS).

It belongs to the peptidase C19 family. As to quaternary structure, interacts with atms/PAF1, but not with CycT.

It localises to the nucleus. Its subcellular location is the nucleolus. The enzyme catalyses Thiol-dependent hydrolysis of ester, thioester, amide, peptide and isopeptide bonds formed by the C-terminal Gly of ubiquitin (a 76-residue protein attached to proteins as an intracellular targeting signal).. Functionally, required for maintaining multiple types of adult stem cells, including male and female germline, epithelial follicle cell and intestinal stem cells. May function as a transcriptional repressor by continually deubiquiting histone H2B at the promoters of genes critical for cellular differentiation, thereby preventing histone H3 'Lys-4' trimethylation (H3K4). Controls selective autophagy activation by ubiquitinated proteins. The chain is Ubiquitin carboxyl-terminal hydrolase 36 (Usp36) from Drosophila virilis (Fruit fly).